We begin with the raw amino-acid sequence, 318 residues long: NADH-ubiquinone oxidoreductase chain 1 (318 aa).

8 consecutive transmembrane segments (helical) span residues 2 to 22, 70 to 90, 100 to 120, 147 to 167, 171 to 191, 217 to 237, 254 to 276, and 294 to 314; these read FMINVLLLIIPILLAVAFLTL, MFIIAPILALTLALTMWIPLP, LGILFMLAMSSLAVYSILWSG, AIILLSVLLMSGSFTLSTLII, YLWLIFPSWPLAMMWFISTLA, AGPFALFFLAEYANIIMMNIF, LYSINFTMKTLLLTCSFLWIRAS, and LPLTLALCMWHVSLPIMLSSI.

This sequence belongs to the complex I subunit 1 family. As to quaternary structure, core subunit of respiratory chain NADH dehydrogenase (Complex I) which is composed of 45 different subunits.

The protein localises to the mitochondrion inner membrane. It catalyses the reaction a ubiquinone + NADH + 5 H(+)(in) = a ubiquinol + NAD(+) + 4 H(+)(out). Functionally, core subunit of the mitochondrial membrane respiratory chain NADH dehydrogenase (Complex I) which catalyzes electron transfer from NADH through the respiratory chain, using ubiquinone as an electron acceptor. Essential for the catalytic activity and assembly of complex I. In Equus asinus (Donkey), this protein is NADH-ubiquinone oxidoreductase chain 1 (MT-ND1).